The sequence spans 369 residues: Adenosine 3'-phospho 5'-phosphosulfate transporter 2 (369 aa).

N39 is a glycosylation site (N-linked (GlcNAc...) asparagine). Transmembrane regions (helical) follow at residues 46-66, 79-99, 115-135, 138-158, 168-188, and 191-211; these read LTQF…YGYL, YGWY…LIEL, MLIA…LGYL, PTQV…GVFI, VSAA…DSTI, and NFNL…AVIG. N-linked (GlcNAc...) asparagine glycosylation is present at N222. 4 consecutive transmembrane segments (helical) span residues 235–255, 266–285, 292–314, and 317–337; these read IGFV…PAVA, GYAF…VLAL, LLAV…LFFA, and FTFQ…LNVY.

Belongs to the nucleotide-sugar transporter family. SLC35B subfamily.

Its subcellular location is the golgi apparatus membrane. It carries out the reaction 3'-phosphoadenylyl sulfate(in) + adenosine 3',5'-bisphosphate(out) = 3'-phosphoadenylyl sulfate(out) + adenosine 3',5'-bisphosphate(in). In terms of biological role, probably functions as a 3'-phosphoadenylyl sulfate:adenosine 3',5'-bisphosphate antiporter at the Golgi membranes. Mediates the transport from the cytosol into the lumen of the Golgi of 3'-phosphoadenylyl sulfate/adenosine 3'-phospho 5'-phosphosulfate (PAPS), a universal sulfuryl donor for sulfation events that take place in that compartment. This chain is Adenosine 3'-phospho 5'-phosphosulfate transporter 2, found in Mus musculus (Mouse).